Here is a 183-residue protein sequence, read N- to C-terminus: Inosine triphosphate pyrophosphatase (183 aa).

T8–K13 contacts ITP. Residue E36 coordinates Mg(2+). Residues K48, D64–T65, K81, F140–D143, K161, and H166–R167 each bind ITP.

Belongs to the HAM1 NTPase family. Homodimer. The cofactor is Mg(2+). Mn(2+) serves as cofactor.

Its subcellular location is the cytoplasm. It is found in the nucleus. It catalyses the reaction ITP + H2O = IMP + diphosphate + H(+). The enzyme catalyses dITP + H2O = dIMP + diphosphate + H(+). The catalysed reaction is XTP + H2O = XMP + diphosphate + H(+). Its function is as follows. Pyrophosphatase that hydrolyzes non-canonical purine nucleotides such as inosine triphosphate (ITP), deoxyinosine triphosphate (dITP) or xanthosine 5'-triphosphate (XTP) to their respective monophosphate derivatives. The enzyme does not distinguish between the deoxy- and ribose forms. Probably excludes non-canonical purines from RNA and DNA precursor pools, thus preventing their incorporation into RNA and DNA and avoiding chromosomal lesions. This chain is Inosine triphosphate pyrophosphatase, found in Emericella nidulans (strain FGSC A4 / ATCC 38163 / CBS 112.46 / NRRL 194 / M139) (Aspergillus nidulans).